The primary structure comprises 227 residues: Transcriptional regulatory protein CusR (227 aa).

The Response regulatory domain maps to 2 to 116 (KLLIVEDEKK…ELLARVRTLL (115 aa)). The residue at position 51 (aspartate 51) is a 4-aspartylphosphate. Positions 125–223 (ESQFQVADLM…VRGVGYMLEV (99 aa)) form a DNA-binding region, ompR/PhoB-type.

Phosphorylated by CusS.

Its subcellular location is the cytoplasm. In terms of biological role, member of the two-component regulatory system CusS/CusR involved in response to copper and silver. This Escherichia coli O6:H1 (strain CFT073 / ATCC 700928 / UPEC) protein is Transcriptional regulatory protein CusR (cusR).